Consider the following 238-residue polypeptide: Probable transcriptional regulatory protein YeeN (238 aa).

Belongs to the TACO1 family. YeeN subfamily.

The protein localises to the cytoplasm. This chain is Probable transcriptional regulatory protein YeeN, found in Salmonella typhimurium (strain LT2 / SGSC1412 / ATCC 700720).